The chain runs to 486 residues: V-type proton ATPase subunit B1 (486 aa).

Gly2 carries the post-translational modification N-acetylglycine.

Belongs to the ATPase alpha/beta chains family. V-ATPase is a heteromultimeric enzyme composed of a peripheral catalytic V1 complex (components A to H) attached to an integral membrane V0 proton pore complex (components: a, c, c'', d and e).

Its subcellular location is the vacuole membrane. Functionally, non-catalytic subunit of the peripheral V1 complex of vacuolar ATPase. V-ATPase is responsible for acidifying a variety of intracellular compartments in eukaryotic cells. The sequence is that of V-type proton ATPase subunit B1 (VHA-B1) from Arabidopsis thaliana (Mouse-ear cress).